The sequence spans 431 residues: Glutamate-1-semialdehyde 2,1-aminomutase (431 aa).

The residue at position 267 (K267) is an N6-(pyridoxal phosphate)lysine.

The protein belongs to the class-III pyridoxal-phosphate-dependent aminotransferase family. HemL subfamily. In terms of assembly, homodimer. The cofactor is pyridoxal 5'-phosphate.

Its subcellular location is the cytoplasm. The catalysed reaction is (S)-4-amino-5-oxopentanoate = 5-aminolevulinate. Its pathway is porphyrin-containing compound metabolism; protoporphyrin-IX biosynthesis; 5-aminolevulinate from L-glutamyl-tRNA(Glu): step 2/2. The polypeptide is Glutamate-1-semialdehyde 2,1-aminomutase (Syntrophomonas wolfei subsp. wolfei (strain DSM 2245B / Goettingen)).